Here is a 229-residue protein sequence, read N- to C-terminus: uncharacterized protein (229 aa).

Residues 24-78 (LRKWRSIFNASQSDLARKLGISPSVISDYESGRRKPGTAFLKKFVCALIELDGER) form the HTH cro/C1-type domain. A DNA-binding region (H-T-H motif) is located at residues 35-54 (QSDLARKLGISPSVISDYES).

This is an uncharacterized protein from Archaeoglobus fulgidus (strain ATCC 49558 / DSM 4304 / JCM 9628 / NBRC 100126 / VC-16).